Consider the following 493-residue polypeptide: Probable plastidic glucose transporter 2 (493 aa).

Positions 1-14 (MLGLQRETSSMYKR) are enriched in polar residues. Residues 1 to 24 (MLGLQRETSSMYKRTSSRDYSPMI) are disordered. The next 12 membrane-spanning stretches (helical) occupy residues 52-72 (LPHV…LGVV), 94-114 (LVVS…GGVA), 128-148 (LPMI…VMLL), 151-171 (FLVG…VTEV), 182-202 (SFIQ…GIPV), 211-231 (VCFW…FLCA), 293-313 (VVFI…NAVF), 329-349 (LGNI…MVLM), 356-376 (LLLL…VGAT), 392-412 (GTLV…GLLL), 424-444 (AMAF…LLFL), and 450-470 (LGPR…VMFV).

This sequence belongs to the major facilitator superfamily. Sugar transporter (TC 2.A.1.1) family.

The protein localises to the plastid. Its subcellular location is the chloroplast membrane. Its function is as follows. May be involved in the efflux of glucose towards the cytosol. This chain is Probable plastidic glucose transporter 2, found in Arabidopsis thaliana (Mouse-ear cress).